A 325-amino-acid chain; its full sequence is NADH-quinone oxidoreductase subunit H (325 aa).

A run of 8 helical transmembrane segments spans residues 11–31 (ILLSILKAVVILLVVVTCGAF), 81–101 (VIFTLAPVIAFTSLLLAFAIV), 114–134 (IGILFFLMMAGLAVYAVLFAG), 154–174 (LSYEVFLGLSLMGVVAQAGSF), 186–206 (LWNVIPQFFGFVTFAIAGVAV), 237–257 (FFVGEYIGIVTVSALIVTLFF), 265–285 (LPPFIWFALKTAFFMMMFILI), and 304–324 (VCLPLTLVNLLVTAAVILWQA).

The protein belongs to the complex I subunit 1 family. As to quaternary structure, NDH-1 is composed of 13 different subunits. Subunits NuoA, H, J, K, L, M, N constitute the membrane sector of the complex.

Its subcellular location is the cell inner membrane. It catalyses the reaction a quinone + NADH + 5 H(+)(in) = a quinol + NAD(+) + 4 H(+)(out). NDH-1 shuttles electrons from NADH, via FMN and iron-sulfur (Fe-S) centers, to quinones in the respiratory chain. The immediate electron acceptor for the enzyme in this species is believed to be ubiquinone. Couples the redox reaction to proton translocation (for every two electrons transferred, four hydrogen ions are translocated across the cytoplasmic membrane), and thus conserves the redox energy in a proton gradient. This subunit may bind ubiquinone. The polypeptide is NADH-quinone oxidoreductase subunit H (Klebsiella pneumoniae (strain 342)).